The primary structure comprises 94 residues: Small ribosomal subunit protein bS18 (94 aa).

Belongs to the bacterial ribosomal protein bS18 family. In terms of assembly, part of the 30S ribosomal subunit. Forms a tight heterodimer with protein bS6.

Its function is as follows. Binds as a heterodimer with protein bS6 to the central domain of the 16S rRNA, where it helps stabilize the platform of the 30S subunit. This chain is Small ribosomal subunit protein bS18, found in Rickettsia bellii (strain OSU 85-389).